The sequence spans 451 residues: Tapasin-related protein (451 aa).

An N-terminal signal peptide occupies residues 1 to 20; sequence MGLEPSWYLLLCLAVSGAAG. Topologically, residues 21–412 are lumenal; the sequence is TDPPTAPTTA…RVLPNPEQRG (392 aa). In terms of domain architecture, Ig-like V-type spans 196-301; that stretch reads FQVTSETQTL…TSLYQAQQIM (106 aa). Cystine bridges form between Cys-217–Cys-288 and Cys-326–Cys-387. Asn-270 and Asn-277 each carry an N-linked (GlcNAc...) asparagine glycan. The Ig-like C1-type domain occupies 302 to 399; that stretch reads PLNILAPPKI…AHVSLEEPLT (98 aa). Residues 413 to 433 traverse the membrane as a helical segment; it reads TLGVIFASIIFLSALLLFLGL. The Cytoplasmic portion of the chain corresponds to 434 to 451; it reads HRQQASSSRSTRPMRHSG.

In terms of assembly, interacts with peptide-free HLA-A*02-B2M complexes or those loaded with low affinity peptides, likely facilitating peptide exchange onto higher affinity peptides. Interacts with MR1 in a ligand-independent way; this interaction may stabilize MR1 pool and facilitate ligand loading and dissociation. In terms of tissue distribution, widely expressed.

It is found in the cell membrane. It localises to the endoplasmic reticulum membrane. The protein resides in the microsome membrane. The protein localises to the golgi apparatus membrane. In terms of biological role, component of the antigen processing and presentation pathway, which binds to MHC class I coupled with beta2-microglobulin/B2M. Association between TAPBPR and MHC class I occurs in the absence of a functional peptide-loading complex (PLC). Expression seems to slow down and down-regulate MHC class I surface expression. The protein is Tapasin-related protein (Tapbpl) of Mus musculus (Mouse).